A 71-amino-acid chain; its full sequence is Protein DP71L (71 aa).

2 important for host CHOP inhibition regions span residues 16–18 (VRF) and 57–61 (LSAVL).

It belongs to the asfivirus DP71L family. As to quaternary structure, interacts (via C-terminus) with host PPP1CB.

Functionally, interacts with the host phosphatase PP1 catalytic subunit (PPP1CB) and recruits it to dephosphorylate EIF2S1/eIF2alpha and therefore restores the host translation that has been shut-down by the host. Also inhibits the EIF2S1/eIF2alpha-ATF4-DDIT3/CHOP pathway. The protein is Protein DP71L of Ornithodoros (relapsing fever ticks).